The sequence spans 206 residues: Thiamine-phosphate synthase (206 aa).

4-amino-2-methyl-5-(diphosphooxymethyl)pyrimidine is bound by residues 33–37 (QMRFK) and Asn-65. Mg(2+) is bound by residues Asp-66 and Asp-85. Residue Thr-104 participates in 4-amino-2-methyl-5-(diphosphooxymethyl)pyrimidine binding. 130-132 (TAT) lines the 2-[(2R,5Z)-2-carboxy-4-methylthiazol-5(2H)-ylidene]ethyl phosphate pocket. Position 133 (Lys-133) interacts with 4-amino-2-methyl-5-(diphosphooxymethyl)pyrimidine. Gly-166 provides a ligand contact to 2-[(2R,5Z)-2-carboxy-4-methylthiazol-5(2H)-ylidene]ethyl phosphate.

This sequence belongs to the thiamine-phosphate synthase family. The cofactor is Mg(2+).

The catalysed reaction is 2-[(2R,5Z)-2-carboxy-4-methylthiazol-5(2H)-ylidene]ethyl phosphate + 4-amino-2-methyl-5-(diphosphooxymethyl)pyrimidine + 2 H(+) = thiamine phosphate + CO2 + diphosphate. The enzyme catalyses 2-(2-carboxy-4-methylthiazol-5-yl)ethyl phosphate + 4-amino-2-methyl-5-(diphosphooxymethyl)pyrimidine + 2 H(+) = thiamine phosphate + CO2 + diphosphate. It catalyses the reaction 4-methyl-5-(2-phosphooxyethyl)-thiazole + 4-amino-2-methyl-5-(diphosphooxymethyl)pyrimidine + H(+) = thiamine phosphate + diphosphate. It participates in cofactor biosynthesis; thiamine diphosphate biosynthesis; thiamine phosphate from 4-amino-2-methyl-5-diphosphomethylpyrimidine and 4-methyl-5-(2-phosphoethyl)-thiazole: step 1/1. Condenses 4-methyl-5-(beta-hydroxyethyl)thiazole monophosphate (THZ-P) and 2-methyl-4-amino-5-hydroxymethyl pyrimidine pyrophosphate (HMP-PP) to form thiamine monophosphate (TMP). This chain is Thiamine-phosphate synthase, found in Flavobacterium psychrophilum (strain ATCC 49511 / DSM 21280 / CIP 103535 / JIP02/86).